Reading from the N-terminus, the 445-residue chain is tRNA-2-methylthio-N(6)-dimethylallyladenosine synthase (445 aa).

The MTTase N-terminal domain maps to 13-129 (KKLFIKTYGC…LPAMARAGRG (117 aa)). Cys-22, Cys-58, Cys-92, Cys-163, Cys-167, and Cys-170 together coordinate [4Fe-4S] cluster. A Radical SAM core domain is found at 149 to 383 (TRRAPAAFLT…LTSQQKAAQE (235 aa)). One can recognise a TRAM domain in the interval 383-445 (EGMVGRELGV…PNSLAGVLAA (63 aa)).

The protein belongs to the methylthiotransferase family. MiaB subfamily. As to quaternary structure, monomer. The cofactor is [4Fe-4S] cluster.

It is found in the cytoplasm. The enzyme catalyses N(6)-dimethylallyladenosine(37) in tRNA + (sulfur carrier)-SH + AH2 + 2 S-adenosyl-L-methionine = 2-methylsulfanyl-N(6)-dimethylallyladenosine(37) in tRNA + (sulfur carrier)-H + 5'-deoxyadenosine + L-methionine + A + S-adenosyl-L-homocysteine + 2 H(+). Functionally, catalyzes the methylthiolation of N6-(dimethylallyl)adenosine (i(6)A), leading to the formation of 2-methylthio-N6-(dimethylallyl)adenosine (ms(2)i(6)A) at position 37 in tRNAs that read codons beginning with uridine. The polypeptide is tRNA-2-methylthio-N(6)-dimethylallyladenosine synthase (Paracoccus denitrificans (strain Pd 1222)).